We begin with the raw amino-acid sequence, 127 residues long: Protein ApaG (127 aa).

In terms of domain architecture, ApaG spans 2–127 (SELVEHIQVH…FRLAGPNQVH (126 aa)).

The protein is Protein ApaG of Chromohalobacter salexigens (strain ATCC BAA-138 / DSM 3043 / CIP 106854 / NCIMB 13768 / 1H11).